The following is a 1121-amino-acid chain: Peroxisomal ATPase PEX1 (1121 aa).

2 disordered regions span residues Ser187 to Glu221 and Ser1099 to Met1121. Residues Ser205–Thr217 are compositionally biased toward low complexity.

This sequence belongs to the AAA ATPase family. As to quaternary structure, interacts with PEX6; forming the PEX1-PEX6 AAA ATPase complex, which is composed of a heterohexamer formed by a trimer of PEX1-PEX6 dimers.

Its subcellular location is the membrane. The catalysed reaction is ATP + H2O = ADP + phosphate + H(+). Functionally, component of the PEX1-PEX6 AAA ATPase complex involved in peroxisome biosynthesis. The complex acts as a protein dislocase complex that mediates the ATP-dependent extraction of the PEX5 receptor from peroxisomal membranes, an essential step for PEX5 recycling. Specifically recognizes PEX5 monoubiquitinated at 'Cys-6', and pulls it out of the peroxisome lumen through the PEX2-PEX10-PEX12 retrotranslocation channel. Extraction by the PEX1-PEX6 AAA ATPase complex is accompanied by unfolding of the TPR repeats and release of bound cargo from PEX5. The chain is Peroxisomal ATPase PEX1 from Komagataella phaffii (strain GS115 / ATCC 20864) (Yeast).